The following is a 280-amino-acid chain: Ribosomal RNA small subunit methyltransferase A (280 aa).

6 residues coordinate S-adenosyl-L-methionine: Asn-28, Leu-30, Gly-55, Glu-77, Asp-103, and Asn-122.

This sequence belongs to the class I-like SAM-binding methyltransferase superfamily. rRNA adenine N(6)-methyltransferase family. RsmA subfamily.

It localises to the cytoplasm. The catalysed reaction is adenosine(1518)/adenosine(1519) in 16S rRNA + 4 S-adenosyl-L-methionine = N(6)-dimethyladenosine(1518)/N(6)-dimethyladenosine(1519) in 16S rRNA + 4 S-adenosyl-L-homocysteine + 4 H(+). Its function is as follows. Specifically dimethylates two adjacent adenosines (A1518 and A1519) in the loop of a conserved hairpin near the 3'-end of 16S rRNA in the 30S particle. May play a critical role in biogenesis of 30S subunits. This is Ribosomal RNA small subunit methyltransferase A from Roseobacter denitrificans (strain ATCC 33942 / OCh 114) (Erythrobacter sp. (strain OCh 114)).